Here is a 777-residue protein sequence, read N- to C-terminus: Reticulon-1 (777 aa).

4 disordered regions span residues 1–77 (MAAP…ETAS), 129–182 (NGHI…ILAD), 198–245 (TRPQ…PVEG), and 293–573 (ATHE…IPGP). Phosphoserine occurs at positions 13 and 68. Basic and acidic residues predominate over residues 199–233 (RPQEAKGQEEQSPGLEDKDLDFKDKDSEVSTKPEG). 3 positions are modified to phosphoserine: Ser-210, Ser-241, and Ser-325. Low complexity predominate over residues 326 to 339 (PGSVTPPSSGTEPS). Phosphoserine is present on residues Ser-348 and Ser-350. Residues 393–406 (IPSSLDQEASSAES) show a composition bias toward polar residues. Position 485 is a phosphoserine (Ser-485). Over residues 495–510 (AIREETSSRATEERAP) the composition is skewed to basic and acidic residues. Over residues 525-534 (TPVTLQSRPE) the composition is skewed to polar residues. The Reticulon domain occupies 590–777 (AIDLLYWRDI…KIPGAKRHAE (188 aa)). Helical transmembrane passes span 604–624 (IVFG…VVSV) and 706–726 (FAVL…LTLL).

In terms of assembly, interacts with NDRG1. Interacts with BACE1. Interacts with TMEM33. Interacts with UGCG; regulates the ceramide glucosyltransferase activity of UGCG. Expressed predominantly in central and peripheral nervous system of newborn and adult rats. Low levels have been also detected in heart, adrenal gland and spleen. Expression of isoform RTN1-B is restricted to particular neuronal types.

It is found in the endoplasmic reticulum membrane. Its subcellular location is the golgi apparatus membrane. Inhibits amyloid precursor protein processing, probably by blocking BACE1 activity. This is Reticulon-1 (Rtn1) from Rattus norvegicus (Rat).